Here is a 340-residue protein sequence, read N- to C-terminus: GPALPP motifs-containing protein 1 (340 aa).

Residues 1–304 (MARDLIGPAL…PQERIPFDRD (304 aa)) are disordered. Residue Ala2 is modified to N-acetylalanine. A GPALPP motif 1 motif is present at residues 7–12 (GPALPP). Phosphoserine is present on Ser28. Residues 32 to 37 (GPALPP) carry the GPALPP motif 2 motif. Residues 60–69 (GNQESEEDDS) are compositionally biased toward acidic residues. Residues 92–97 (GPALPP) carry the GPALPP motif 3 motif. Ser105 carries the post-translational modification Phosphoserine. Residues 107–116 (PRPIIGPALP) are compositionally biased toward pro residues. The GPALPP motif 4 motif lies at 112–117 (GPALPP). Residues 124-133 (QKSDKGRDDP) are compositionally biased toward basic and acidic residues. Residue Thr138 is modified to Phosphothreonine. Phosphoserine is present on residues Ser140 and Ser141. 4 stretches are compositionally biased toward basic and acidic residues: residues 163–187 (EFEK…KPIV), 227–261 (PADR…KRLA), 269–279 (ESKRSESLMDI), and 287–304 (KAAE…FDRD). Residue Lys271 forms a Glycyl lysine isopeptide (Lys-Gly) (interchain with G-Cter in SUMO2) linkage. Residue Lys308 forms a Glycyl lysine isopeptide (Lys-Gly) (interchain with G-Cter in SUMO2) linkage.

The polypeptide is GPALPP motifs-containing protein 1 (GPALPP1) (Homo sapiens (Human)).